A 1310-amino-acid polypeptide reads, in one-letter code: Multidrug resistance protein 4 (1310 aa).

5 helical membrane passes run 48 to 68 (WLDL…GVLT), 125 to 145 (MVCF…CFFV), 196 to 216 (KFGI…IGFA), 223 to 243 (LVIM…AVFA), and 299 to 319 (GLTV…AFSL). The region spanning 55 to 368 (AVGIFGSIGC…IAIPLNIFAT (314 aa)) is the ABC transmembrane type-1 1 domain. N-linked (GlcNAc...) asparagine glycosylation occurs at Asn336. Residues 342-362 (VMIVFICVLIATQGLSIIAIP) traverse the membrane as a helical segment. Asn402 is a glycosylation site (N-linked (GlcNAc...) asparagine). An ABC transporter 1 domain is found at 403 to 642 (ITLEDVQFRY…KGTYYGLVKR (240 aa)). 438–445 (GASGCGKS) provides a ligand contact to ATP. An N-linked (GlcNAc...) asparagine glycan is attached at Asn608. 2 consecutive transmembrane segments (helical) span residues 721-741 (WFLS…FPFF) and 773-793 (IIVV…IGLF). In terms of domain architecture, ABC transmembrane type-1 2 spans 722-1030 (FLSTFGFIGG…LGNIVPDIGK (309 aa)). An N-linked (GlcNAc...) asparagine glycan is attached at Asn816. 3 consecutive transmembrane segments (helical) span residues 849–869 (VGNV…AFYY), 871–891 (WKVS…VFIN), and 945–965 (IGIY…TLLT). Positions 1065-1304 (IEFKDICFRY…KGFYYTLAMQ (240 aa)) constitute an ABC transporter 2 domain. An ATP-binding site is contributed by 1100-1107 (GASGCGKS).

This sequence belongs to the ABC transporter superfamily. ABCB family. Multidrug resistance exporter (TC 3.A.1.201) subfamily.

It is found in the membrane. The catalysed reaction is ATP + H2O + xenobioticSide 1 = ADP + phosphate + xenobioticSide 2.. In terms of biological role, energy-dependent efflux pump responsible for decreased drug accumulation in multidrug resistance parasites. This Entamoeba histolytica (strain ATCC 30459 / HM-1:IMSS / ABRM) protein is Multidrug resistance protein 4.